We begin with the raw amino-acid sequence, 370 residues long: Lipoyl synthase, mitochondrial (370 aa).

Residues Cys100, Cys105, Cys111, Cys131, Cys135, Cys138, and Ser346 each coordinate [4Fe-4S] cluster. Positions 116-335 (DKSRATATIM…KEVAEKLGFL (220 aa)) constitute a Radical SAM core domain.

The protein belongs to the radical SAM superfamily. Lipoyl synthase family. [4Fe-4S] cluster is required as a cofactor.

The protein resides in the mitochondrion. It carries out the reaction [[Fe-S] cluster scaffold protein carrying a second [4Fe-4S](2+) cluster] + N(6)-octanoyl-L-lysyl-[protein] + 2 oxidized [2Fe-2S]-[ferredoxin] + 2 S-adenosyl-L-methionine + 4 H(+) = [[Fe-S] cluster scaffold protein] + N(6)-[(R)-dihydrolipoyl]-L-lysyl-[protein] + 4 Fe(3+) + 2 hydrogen sulfide + 2 5'-deoxyadenosine + 2 L-methionine + 2 reduced [2Fe-2S]-[ferredoxin]. It functions in the pathway protein modification; protein lipoylation via endogenous pathway; protein N(6)-(lipoyl)lysine from octanoyl-[acyl-carrier-protein]: step 2/2. In terms of biological role, catalyzes the radical-mediated insertion of two sulfur atoms into the C-6 and C-8 positions of the octanoyl moiety bound to the lipoyl domains of lipoate-dependent enzymes, thereby converting the octanoylated domains into lipoylated derivatives. The protein is Lipoyl synthase, mitochondrial (lip5) of Schizosaccharomyces pombe (strain 972 / ATCC 24843) (Fission yeast).